We begin with the raw amino-acid sequence, 349 residues long: Protein Wnt-7b (349 aa).

An N-terminal signal peptide occupies residues 1-24; it reads MHRNFRKWIFYVFLCFGVIYVKLG. 5 cysteine pairs are disulfide-bonded: Cys73-Cys84, Cys123-Cys131, Cys133-Cys152, Cys200-Cys214, and Cys202-Cys209. Asn83 and Asn127 each carry an N-linked (GlcNAc...) asparagine glycan. Ser206 carries the O-palmitoleoyl serine; by PORCN lipid modification. The disordered linker stretch occupies residues 238–266; it reads VEVVRASRLRQPTFLKIKQIKSYQKPMET. 6 cysteine pairs are disulfide-bonded: Cys278–Cys309, Cys294–Cys304, Cys308–Cys348, Cys324–Cys339, Cys326–Cys336, and Cys331–Cys332. N-linked (GlcNAc...) asparagine glycosylation is present at Asn295.

The protein belongs to the Wnt family. In terms of processing, palmitoleoylation is required for efficient binding to frizzled receptors. Depalmitoleoylation leads to Wnt signaling pathway inhibition. As to expression, expressed in differentiating lens fiber cells.

It localises to the secreted. The protein localises to the extracellular space. It is found in the extracellular matrix. Ligand for members of the frizzled family of seven transmembrane receptors that functions in the canonical Wnt/beta-catenin signaling pathway. Required for normal fusion of the chorion and the allantois during placenta development. Required for central nervous system (CNS) angiogenesis and blood-brain barrier regulation. The sequence is that of Protein Wnt-7b (WNT7B) from Gallus gallus (Chicken).